Consider the following 391-residue polypeptide: Chorismate synthase (391 aa).

Positions 39 and 45 each coordinate NADP(+). Residues 133-135 (RAS), 254-255 (QA), glycine 299, 314-318 (KPIAT), and arginine 340 contribute to the FMN site.

It belongs to the chorismate synthase family. As to quaternary structure, homotetramer. It depends on FMNH2 as a cofactor.

The catalysed reaction is 5-O-(1-carboxyvinyl)-3-phosphoshikimate = chorismate + phosphate. It participates in metabolic intermediate biosynthesis; chorismate biosynthesis; chorismate from D-erythrose 4-phosphate and phosphoenolpyruvate: step 7/7. Its function is as follows. Catalyzes the anti-1,4-elimination of the C-3 phosphate and the C-6 proR hydrogen from 5-enolpyruvylshikimate-3-phosphate (EPSP) to yield chorismate, which is the branch point compound that serves as the starting substrate for the three terminal pathways of aromatic amino acid biosynthesis. This reaction introduces a second double bond into the aromatic ring system. The protein is Chorismate synthase of Symbiobacterium thermophilum (strain DSM 24528 / JCM 14929 / IAM 14863 / T).